The sequence spans 213 residues: Dimethylamine corrinoid protein 1 (213 aa).

The B12-binding N-terminal domain maps to 1-90 (MSKEELLQEL…LMPEGSASSK (90 aa)). A B12-binding domain is found at 91–213 (MGVIVNGTVE…AVAKAKELLA (123 aa)). Histidine 104 contributes to the methylcob(III)alamin binding site.

This sequence belongs to the methylamine corrinoid protein family.

It functions in the pathway one-carbon metabolism; methanogenesis from dimethylamine. Functionally, acts as a methyl group carrier between MtbB and MtbA. The sequence is that of Dimethylamine corrinoid protein 1 (mtbC1) from Methanosarcina acetivorans (strain ATCC 35395 / DSM 2834 / JCM 12185 / C2A).